The primary structure comprises 388 residues: P2X purinoceptor 4 (388 aa).

The Cytoplasmic segment spans residues 1 to 33; that stretch reads MAGCCAALAAFLFEYDTPRIVLIRSRKVGLMNR. A helical membrane pass occupies residues 34 to 54; it reads AVQLLILAYVIGWVFVWEKGY. The Extracellular segment spans residues 55–338; the sequence is QETDSVVSSV…KFDIIPTMIN (284 aa). Lys67 and Lys69 together coordinate ATP. Positions 67 and 69 each coordinate CTP. Asn75 and Asn110 each carry an N-linked (GlcNAc...) asparagine glycan. Cystine bridges form between Cys116/Cys165, Cys126/Cys149, and Cys132/Cys159. Residues Asn153 and Asn184 are each glycosylated (N-linked (GlcNAc...) asparagine). ATP contacts are provided by Thr186 and Leu188. Thr186 is a binding site for CTP. Residues Asn199 and Asn208 are each glycosylated (N-linked (GlcNAc...) asparagine). Intrachain disulfides connect Cys217/Cys227 and Cys261/Cys270. The ATP site is built by Asn293, Arg295, and Lys313. Asn293, Arg295, and Lys313 together coordinate CTP. Residues 339–359 traverse the membrane as a helical segment; sequence IGSGLALLGMATVLCDIIVLY. Topologically, residues 360-388 are cytoplasmic; that stretch reads CMKKRLYYREKKYKYVEDYEQGLASELDQ.

This sequence belongs to the P2X receptor family. As to quaternary structure, functional P2RXs are organized as homomeric and heteromeric trimers. Forms heterotrimer with P2RX1. Interacts with P2RX7 (via C-terminus); this interaction is functional only in the presence of ATP. Forms heterotrimer with P2RX4; functional differences between homomeric P2RX4 and P2RX4/6 heterotrimer are minor. Interacts with AP1M2.

It is found in the cell membrane. The protein localises to the lysosome membrane. The catalysed reaction is K(+)(in) = K(+)(out). The enzyme catalyses Na(+)(in) = Na(+)(out). It carries out the reaction Ca(2+)(in) = Ca(2+)(out). With respect to regulation, activated by ATP. pH-dependent and inhibited by acidic pH. Its function is as follows. ATP-gated nonselective transmembrane cation channel permeable to potassium, sodium and calcium. CTP, but not GTP or UTP, functions as a weak affinity agonist for P2RX4. Activated by extracellularly released ATP, it plays multiple role in immunity and central nervous system physiology. Plays a key role in initial steps of T-cell activation and Ca(2+) microdomain formation. Also participates in basal T-cell activity without TCR/CD3 stimulation. Promotes the differentiation and activation of Th17 cells via expression of retinoic acid-related orphan receptor C/RORC. Upon activation, drives microglia motility via the PI3K/Akt pathway. Could also function as an ATP-gated cation channel of lysosomal membranes. The chain is P2X purinoceptor 4 (P2RX4) from Homo sapiens (Human).